A 204-amino-acid chain; its full sequence is Proteasome subunit beta type-3-A (204 aa).

The protein belongs to the peptidase T1B family. In terms of assembly, component of the 20S core complex of the 26S proteasome. The 26S proteasome is composed of a core protease (CP), known as the 20S proteasome, capped at one or both ends by the 19S regulatory particle (RP/PA700). The 20S proteasome core is composed of 28 subunits that are arranged in four stacked rings, resulting in a barrel-shaped structure. The two end rings are each formed by seven alpha subunits, and the two central rings are each formed by seven beta subunits. The catalytic chamber with the active sites is on the inside of the barrel.

Its subcellular location is the cytoplasm. It is found in the nucleus. In terms of biological role, non-catalytic component of the proteasome, a multicatalytic proteinase complex which is characterized by its ability to cleave peptides with Arg, Phe, Tyr, Leu, and Glu adjacent to the leaving group at neutral or slightly basic pH. The proteasome has an ATP-dependent proteolytic activity. This chain is Proteasome subunit beta type-3-A (PBC1), found in Arabidopsis thaliana (Mouse-ear cress).